The following is a 429-amino-acid chain: Light-independent protochlorophyllide reductase subunit N (429 aa).

3 residues coordinate [4Fe-4S] cluster: C32, C57, and C118.

It belongs to the BchN/ChlN family. In terms of assembly, protochlorophyllide reductase is composed of three subunits; BchL, BchN and BchB. Forms a heterotetramer of two BchB and two BchN subunits. Requires [4Fe-4S] cluster as cofactor.

The enzyme catalyses chlorophyllide a + oxidized 2[4Fe-4S]-[ferredoxin] + 2 ADP + 2 phosphate = protochlorophyllide a + reduced 2[4Fe-4S]-[ferredoxin] + 2 ATP + 2 H2O. The protein operates within porphyrin-containing compound metabolism; bacteriochlorophyll biosynthesis (light-independent). In terms of biological role, component of the dark-operative protochlorophyllide reductase (DPOR) that uses Mg-ATP and reduced ferredoxin to reduce ring D of protochlorophyllide (Pchlide) to form chlorophyllide a (Chlide). This reaction is light-independent. The NB-protein (BchN-BchB) is the catalytic component of the complex. This is Light-independent protochlorophyllide reductase subunit N from Rhodopseudomonas palustris (strain ATCC BAA-98 / CGA009).